We begin with the raw amino-acid sequence, 572 residues long: Proline--tRNA ligase (572 aa).

The protein belongs to the class-II aminoacyl-tRNA synthetase family. ProS type 1 subfamily. In terms of assembly, homodimer.

The protein localises to the cytoplasm. The enzyme catalyses tRNA(Pro) + L-proline + ATP = L-prolyl-tRNA(Pro) + AMP + diphosphate. Its function is as follows. Catalyzes the attachment of proline to tRNA(Pro) in a two-step reaction: proline is first activated by ATP to form Pro-AMP and then transferred to the acceptor end of tRNA(Pro). As ProRS can inadvertently accommodate and process non-cognate amino acids such as alanine and cysteine, to avoid such errors it has two additional distinct editing activities against alanine. One activity is designated as 'pretransfer' editing and involves the tRNA(Pro)-independent hydrolysis of activated Ala-AMP. The other activity is designated 'posttransfer' editing and involves deacylation of mischarged Ala-tRNA(Pro). The misacylated Cys-tRNA(Pro) is not edited by ProRS. This is Proline--tRNA ligase from Haemophilus influenzae (strain PittEE).